A 41-amino-acid chain; its full sequence is uncharacterized protein (41 aa).

The signal sequence occupies residues 1 to 23; the sequence is MNFLMRAIFSLLLLFTLSIPVIS.

This is an uncharacterized protein from Escherichia coli (strain K12).